A 586-amino-acid polypeptide reads, in one-letter code: Arginine--tRNA ligase (586 aa).

The short motif at 133 to 143 (ANPTGPLNIVS) is the 'HIGH' region element.

The protein belongs to the class-I aminoacyl-tRNA synthetase family. Monomer.

It localises to the cytoplasm. The catalysed reaction is tRNA(Arg) + L-arginine + ATP = L-arginyl-tRNA(Arg) + AMP + diphosphate. In Leptospira interrogans serogroup Icterohaemorrhagiae serovar copenhageni (strain Fiocruz L1-130), this protein is Arginine--tRNA ligase.